We begin with the raw amino-acid sequence, 396 residues long: Alpha-1-antitrypsin (396 aa).

The signal sequence occupies residues 1–2 (HV). Residues 1–24 (HVEDPQGDAAQKTDTSHHDQEHST) form a disordered region. Residues 14–24 (DTSHHDQEHST) show a composition bias toward basic and acidic residues. At Ser-16 the chain carries Phosphoserine. Asn-48, Asn-85, Asn-123, and Asn-249 each carry an N-linked (GlcNAc...) asparagine glycan. Residues 351–370 (GAMFLEAIPMSIPPEVKFNK) are RCL. Phosphoserine is present on Ser-361.

Belongs to the serpin family. As to quaternary structure, interacts with CELA2A. Interacts with ERGIC3 and LMAN1/ERGIC53. Interacts with PRSS1/Trypsin. Plasma.

The protein localises to the secreted. Functionally, inhibitor of serine proteases. Its primary target is elastase, but it also has a moderate affinity for plasmin and thrombin. Inhibits trypsin, chymotrypsin and plasminogen activator. In Chlorocebus aethiops (Green monkey), this protein is Alpha-1-antitrypsin (SERPINA1).